The primary structure comprises 364 residues: Medium-wave-sensitive opsin 1 (364 aa).

Residues 1–24 (MAQRWDPQRLAGGQPQDSHEDSTQ) form a disordered region. Topologically, residues 1 to 52 (MAQRWDPQRLAGGQPQDSHEDSTQSSIFTYTNSNATRGPFEGPNYHIAPRWV) are extracellular. Positions 17 to 43 (DSHEDSTQSSIFTYTNSNATRGPFEGP) are required for 11-cis-retinal regeneration. N-linked (GlcNAc...) asparagine glycosylation is present at N34. Residues 53–77 (YHITSTWMIIVVIASVFTNGLVLVA) form a helical membrane-spanning segment. Residues 78-89 (TMKFKKLRHPLN) are Cytoplasmic-facing. A helical transmembrane segment spans residues 90–115 (WILVNLAIADLAETVIASTISVVNQL). Residues 116–129 (YGYFVLGHPLCVVE) are Extracellular-facing. An intrachain disulfide couples C126 to C203. The chain crosses the membrane as a helical span at residues 130-149 (GYTVSVCGITGLWSLAIISW). Residues 150–168 (ERWLVVCKPFGNMRFDAKL) are Cytoplasmic-facing. A helical transmembrane segment spans residues 169–192 (AIVGIAFSWIWSAVWTAPPIFGWS). Over 193-218 (RYWPYGLKTSCGPDVFSGTSYPGVQS) the chain is Extracellular. A helical transmembrane segment spans residues 219–246 (YMMVLMVTCCIIPLSIIILCYLQVWLAI). The Cytoplasmic portion of the chain corresponds to 247–268 (RAVAKQQKESESTQKAEKEVTR). The helical transmembrane segment at 269–292 (MVVVMVFAYCLCWGPYTFFACFAT) threads the bilayer. The Extracellular segment spans residues 293–300 (ANPGYAFH). The chain crosses the membrane as a helical span at residues 301–320 (PLVAALPAYFAKSATIYNPI). At K312 the chain carries N6-(retinylidene)lysine. Residues 321 to 364 (IYVFMNRQFRNCILQLFGKKVDDTSELSSASKTEASSVSSVSPA) are Cytoplasmic-facing.

This sequence belongs to the G-protein coupled receptor 1 family. Opsin subfamily. Monomer. Homodimer. Homotetramer. Post-translationally, O-glycosylated. Phosphorylated on some or all of the serine and threonine residues present in the C-terminal region. Expressed in cone photoreceptor cells.

Its subcellular location is the membrane. In terms of biological role, visual pigments are the light-absorbing molecules that mediate vision. They consist of an apoprotein, opsin, covalently linked to cis-retinal. May increase spectral sensitivity in dim light. In Sciurus carolinensis (Eastern gray squirrel), this protein is Medium-wave-sensitive opsin 1 (OPN1MW).